The sequence spans 376 residues: Pregnancy-associated glycoprotein 2 (376 aa).

The first 15 residues, 1 to 15 (MKWLVLLGLVALSEC), serve as a signal peptide directing secretion. 2 N-linked (GlcNAc...) asparagine glycosylation sites follow: asparagine 51 and asparagine 71. A Peptidase A1 domain is found at 68–373 (YVGNITIGTP…DRKNRRIGLA (306 aa)). Aspartate 86 is a catalytic residue. A disulfide bridge connects residues cysteine 99 and cysteine 104. 3 N-linked (GlcNAc...) asparagine glycosylation sites follow: asparagine 114, asparagine 248, and asparagine 252. A disulfide bond links cysteine 258 and cysteine 262. Aspartate 267 is a catalytic residue. Cysteine 300 and cysteine 333 form a disulfide bridge. Residue asparagine 343 is glycosylated (N-linked (GlcNAc...) asparagine).

This sequence belongs to the peptidase A1 family. N-Glycosylated; the glycans terminate in either N-acetyl-galactosamine (GalNAc) or N-acetyllactosamine. Terminal GalNAc on Asn-linked glycans is greatly reduced prior to parturition while lactosamine-type N-glycans remain unaltered. In terms of tissue distribution, trophoblast and placental tissue. Localized to both the mononucleate and binucleate cells of the trophectoderm.

The protein localises to the secreted. The protein resides in the extracellular space. PAG2 or a processed derivative of this molecule might represent a factor that binds the LH receptor. The sequence is that of Pregnancy-associated glycoprotein 2 (PAG2) from Bos taurus (Bovine).